The sequence spans 373 residues: Outer membrane protein assembly factor BamC (373 aa).

Positions 1-16 (MLKQVTPLVLIAAVTA) are cleaved as a signal peptide. Cysteine 17 carries the N-palmitoyl cysteine lipid modification. Cysteine 17 carries S-diacylglycerol cysteine lipidation.

Belongs to the BamC family. As to quaternary structure, part of the Bam complex.

It is found in the cell outer membrane. Functionally, part of the outer membrane protein assembly complex, which is involved in assembly and insertion of beta-barrel proteins into the outer membrane. This chain is Outer membrane protein assembly factor BamC, found in Shewanella sediminis (strain HAW-EB3).